The following is a 349-amino-acid chain: Prostaglandin reductase 1 (349 aa).

Thr18 is modified (phosphothreonine). Ser20 is subject to Phosphoserine. NADP(+)-binding positions include 152–155, Lys178, Tyr193, Asn217, 239–245, 270–272, and Asn321; these read GAVG, CGAISMY, and FIF. Lys178 is subject to N6-(2-hydroxyisobutyryl)lysine; alternate. Lys178 is subject to N6-acetyllysine; alternate.

The protein belongs to the NADP-dependent oxidoreductase L4BD family. In terms of assembly, monomer or homodimer.

The protein resides in the cytoplasm. The enzyme catalyses 13,14-dihydro-15-oxo-prostaglandin E1 + NADP(+) = 15-oxoprostaglandin E1 + NADPH + H(+). It catalyses the reaction 13,14-dihydro-15-oxo-prostaglandin E2 + NADP(+) = 15-oxoprostaglandin E2 + NADPH + H(+). The catalysed reaction is 13,14-dihydro-15-oxo-prostaglandin F1alpha + NADP(+) = 15-oxoprostaglandin F1alpha + NADPH + H(+). It carries out the reaction 13,14-dihydro-15-oxo-PGF2alpha + NADP(+) = 15-oxoprostaglandin F2alpha + NADPH + H(+). The enzyme catalyses leukotriene B4 + NADP(+) = 12-oxo-leukotriene B4 + NADPH + H(+). It catalyses the reaction 20-hydroxy-leukotriene B4 + NADP(+) = 12-oxo-20-hydroxy-leukotriene B4 + NADPH + H(+). The catalysed reaction is 6-trans-leukotriene B4 + NADP(+) = 12-oxo-(5S)-hydroxy-(6E,8E,10E,14Z)-eicosatetraenoate + NADPH + H(+). It carries out the reaction (5S,12S)-dihydroxy-(6E,10E,12E,14Z)-eicosatetraenoate + NADP(+) = 12-oxo-(5S)-hydroxy-(6E,8E,10E,14Z)-eicosatetraenoate + NADPH + H(+). The enzyme catalyses an n-alkanal + NADP(+) = an alk-2-enal + NADPH + H(+). It catalyses the reaction hexanal + NADP(+) = (E)-hex-2-enal + NADPH + H(+). The catalysed reaction is octanal + NADP(+) = (2E)-octenal + NADPH + H(+). It carries out the reaction decanal + NADP(+) = (2E)-decenal + NADPH + H(+). The enzyme catalyses dodecanal + NADP(+) = (2E)-dodecenal + NADPH + H(+). It catalyses the reaction 4-hydroxynonanal + NADP(+) = (E)-4-hydroxynon-2-enal + NADPH + H(+). The catalysed reaction is pentan-2-one + NADP(+) = (E)-pent-3-en-2-one + NADPH + H(+). It carries out the reaction nonan-2-one + NADP(+) = (3E)-nonen-2-one + NADPH + H(+). NAD(P)H-dependent oxidoreductase involved in metabolic inactivation of pro- and anti-inflammatory eicosanoids: prostaglandins (PG), leukotrienes (LT) and lipoxins (LX). Catalyzes with high efficiency the reduction of the 13,14 double bond of 15-oxoPGs, including 15-oxo-PGE1, 15-oxo-PGE2, 15-oxo-PGF1-alpha and 15-oxo-PGF2-alpha. Catalyzes with lower efficiency the oxidation of the hydroxyl group at C12 of LTB4 and its derivatives, converting them into biologically less active 12-oxo-LTB4 metabolites. Reduces 15-oxo-LXA4 to 13,14 dihydro-15-oxo-LXA4, enhancing neutrophil recruitment at the inflammatory site. Plays a role in metabolic detoxification of alkenals and ketones. Reduces alpha,beta-unsaturated alkenals and ketones, particularly those with medium-chain length, showing highest affinity toward (2E)-decenal and (3E)-3-nonen-2-one. May inactivate 4-hydroxy-2-nonenal, a cytotoxic lipid constituent of oxidized low-density lipoprotein particles. The protein is Prostaglandin reductase 1 (PTGR1) of Oryctolagus cuniculus (Rabbit).